The sequence spans 432 residues: Mitochondrial distribution and morphology protein 12 (432 aa).

An SMP-LTD domain is found at 1–432; sequence MSIEVDWRAA…VFPSFWTFLI (432 aa). Disordered stretches follow at residues 182–273 and 354–377; these read WTDP…PRMR and QQEARGQDDRPWSSADPTASPKRQ. Low complexity predominate over residues 214–234; it reads TSNPTSRPSTSSTLPSHPSAS. 2 stretches are compositionally biased toward basic and acidic residues: residues 243–253 and 355–364; these read TGKEHGSLAED and QEARGQDDRP.

Belongs to the MDM12 family. Component of the ER-mitochondria encounter structure (ERMES) or MDM complex, composed of mmm1, mdm10, mdm12 and mdm34. A mmm1 homodimer associates with one molecule of mdm12 on each side in a pairwise head-to-tail manner, and the SMP-LTD domains of mmm1 and mdm12 generate a continuous hydrophobic tunnel for phospholipid trafficking.

It is found in the mitochondrion outer membrane. Its subcellular location is the endoplasmic reticulum membrane. Its function is as follows. Component of the ERMES/MDM complex, which serves as a molecular tether to connect the endoplasmic reticulum (ER) and mitochondria. Components of this complex are involved in the control of mitochondrial shape and protein biogenesis, and function in nonvesicular lipid trafficking between the ER and mitochondria. Mdm12 is required for the interaction of the ER-resident membrane protein mmm1 and the outer mitochondrial membrane-resident beta-barrel protein mdm10. The mdm12-mmm1 subcomplex functions in the major beta-barrel assembly pathway that is responsible for biogenesis of all mitochondrial outer membrane beta-barrel proteins, and acts in a late step after the SAM complex. The mdm10-mdm12-mmm1 subcomplex further acts in the TOM40-specific pathway after the action of the mdm12-mmm1 complex. Essential for establishing and maintaining the structure of mitochondria and maintenance of mtDNA nucleoids. The protein is Mitochondrial distribution and morphology protein 12 of Aspergillus oryzae (strain ATCC 42149 / RIB 40) (Yellow koji mold).